An 831-amino-acid chain; its full sequence is Histone acetyltransferase SAS3 (831 aa).

The 307-residue stretch at 267–573 (VWFSQIEYIV…VKYDKLLWEP (307 aa)) folds into the MYST-type HAT domain. A C2HC MYST-type zinc finger spans residues 300 to 325 (VFICEFCLKYMTSRYTFYRHQLKCLT). Position 367 is an N6-acetyllysine; by autocatalysis (Lys367). Residues 419-421 (ILT) and 426-432 (QRKGYGQ) each bind acetyl-CoA. Glu452 functions as the Proton donor/acceptor in the catalytic mechanism. Residue Ser456 participates in acetyl-CoA binding. 2 disordered regions span residues 614–639 (ENYNNSRAHNKRRRRRRRSSEHKTSK) and 719–813 (PLGN…SHIR). Over residues 621 to 633 (AHNKRRRRRRRSS) the composition is skewed to basic residues. Acidic residues-rich tracts occupy residues 736–746 (EQDEVENDVDT) and 755–794 (KEDEDEDEDFTLDDDIEDEQISEENDEEEDTYEEDSDDDE). Over residues 795 to 812 (DGKRKGQEQDENDIESHI) the composition is skewed to basic and acidic residues.

Belongs to the MYST (SAS/MOZ) family. In terms of assembly, component of the NuA3 histone acetyltransferase (HAT) complex. The NuA3 HAT complex has 2 functionally distinct forms that participate in transcription. The NuA3a HAT complex is composed of at least NTO1, SAS3, TAF14, YNG1 and EAF6. The NuA3b HAT complex contains an additional subunit, PDP3. SAS3 interacts with CDC68/SPT16. In terms of processing, autoacetylation at Lys-367 is required for proper function.

It localises to the nucleus. It carries out the reaction L-lysyl-[protein] + acetyl-CoA = N(6)-acetyl-L-lysyl-[protein] + CoA + H(+). Catalytic component of the NuA3 histone acetyltransferase complex, that acetylates H3K14. The NuA3 HAT complex has 2 functionally distinct forms. NuA3a binds H3K4me3, through the PHD finger of YNG1, and acetylates H3K14 at the promoter region of actively transcribed genes to promote transcription initiation. NuA3b binds H3K36me3 at the coding regions of actively transcribed genes, through the PWWP domain of PDP3, and coordinates transcription elongation. In vitro, SAS3 acetylates free histones H3 and H4. It is involved in silencing the HMR locus. The sequence is that of Histone acetyltransferase SAS3 from Saccharomyces cerevisiae (strain ATCC 204508 / S288c) (Baker's yeast).